The primary structure comprises 363 residues: UDP-N-acetylenolpyruvoylglucosamine reductase (363 aa).

Positions 27-197 (LGGWATRVVT…LSVDFRLARS (171 aa)) constitute an FAD-binding PCMH-type domain. R175 is an active-site residue. Residue S252 is the Proton donor of the active site. E355 is an active-site residue.

It belongs to the MurB family. The cofactor is FAD.

It localises to the cytoplasm. It carries out the reaction UDP-N-acetyl-alpha-D-muramate + NADP(+) = UDP-N-acetyl-3-O-(1-carboxyvinyl)-alpha-D-glucosamine + NADPH + H(+). It participates in cell wall biogenesis; peptidoglycan biosynthesis. Its function is as follows. Cell wall formation. This Salinispora arenicola (strain CNS-205) protein is UDP-N-acetylenolpyruvoylglucosamine reductase.